Reading from the N-terminus, the 367-residue chain is 2-aminoethylphosphonate--pyruvate transaminase (367 aa).

Residue K193 is modified to N6-(pyridoxal phosphate)lysine.

The protein belongs to the class-V pyridoxal-phosphate-dependent aminotransferase family. PhnW subfamily. In terms of assembly, homodimer. Pyridoxal 5'-phosphate is required as a cofactor.

The catalysed reaction is (2-aminoethyl)phosphonate + pyruvate = phosphonoacetaldehyde + L-alanine. Functionally, involved in phosphonate degradation. This is 2-aminoethylphosphonate--pyruvate transaminase from Vibrio vulnificus (strain YJ016).